Here is a 560-residue protein sequence, read N- to C-terminus: Membrane protein insertase YidC (560 aa).

6 helical membrane-spanning segments follow: residues 5–25, 334–354, 357–377, 431–451, 476–496, and 522–542; these read IINLIAAIILSLSIIFGWQYF, AIDFGWFYIITKPVFYAMNFF, YVGNFGVSILIVTVIIKLLMF, LPILVQIPVFFSIYKVLYVTI, LFGLLPFSPPLFLMIGAWPIL, and FMPLIFLFMFSSFPVGLLIYW.

It belongs to the OXA1/ALB3/YidC family. Type 1 subfamily. As to quaternary structure, interacts with the Sec translocase complex via SecD. Specifically interacts with transmembrane segments of nascent integral membrane proteins during membrane integration.

It is found in the cell inner membrane. Functionally, required for the insertion and/or proper folding and/or complex formation of integral membrane proteins into the membrane. Involved in integration of membrane proteins that insert both dependently and independently of the Sec translocase complex, as well as at least some lipoproteins. Aids folding of multispanning membrane proteins. In Rickettsia africae (strain ESF-5), this protein is Membrane protein insertase YidC.